Here is a 223-residue protein sequence, read N- to C-terminus: UPF0502 protein Shew185_1758 (223 aa).

It belongs to the UPF0502 family.

The protein is UPF0502 protein Shew185_1758 of Shewanella baltica (strain OS185).